Reading from the N-terminus, the 121-residue chain is MQDTIFLKGMRFYGYHGALSAENEIGQIFKVDVTLKVDLAEAGRTDNVIDTVHYGEVFEEVKSIMEGKAVNLLEHLAERIANRINSQYNRVMETKVRITKENPPIPGHYDGVGIEIVRENK.

Substrate is bound by residues E22, Y54, and 73 to 74 (LE). K100 serves as the catalytic Proton donor/acceptor.

Belongs to the DHNA family. Homooctamer. Four molecules assemble into a ring, and two rings come together to give a cylinder with a hole of at least 13 a diameter.

It catalyses the reaction 7,8-dihydroneopterin = 6-hydroxymethyl-7,8-dihydropterin + glycolaldehyde. The enzyme catalyses 7,8-dihydroneopterin = 7,8-dihydromonapterin. It functions in the pathway cofactor biosynthesis; tetrahydrofolate biosynthesis; 2-amino-4-hydroxy-6-hydroxymethyl-7,8-dihydropteridine diphosphate from 7,8-dihydroneopterin triphosphate: step 3/4. Its function is as follows. Catalyzes the conversion of 7,8-dihydroneopterin to 6-hydroxymethyl-7,8-dihydropterin. Can also catalyze the epimerization of carbon 2' of dihydroneopterin to dihydromonapterin. This chain is Dihydroneopterin aldolase (folB), found in Staphylococcus aureus (strain COL).